Here is a 173-residue protein sequence, read N- to C-terminus: uncharacterized protein (173 aa).

It belongs to the M.jannaschii MJ0150/MJ0739/MJ0745/MJ1460/MJ1642 family.

This is an uncharacterized protein from Methanocaldococcus jannaschii (strain ATCC 43067 / DSM 2661 / JAL-1 / JCM 10045 / NBRC 100440) (Methanococcus jannaschii).